A 372-amino-acid polypeptide reads, in one-letter code: sn-glycerol-3-phosphate import ATP-binding protein UgpC (372 aa).

One can recognise an ABC transporter domain in the interval 2–233; that stretch reads LDIQQLVKTY…PASTFVASFI (232 aa). Residue 35–42 coordinates ATP; the sequence is GPSGCGKS.

It belongs to the ABC transporter superfamily. sn-glycerol-3-phosphate importer (TC 3.A.1.1.3) family. As to quaternary structure, the complex is composed of two ATP-binding proteins (UgpC), two transmembrane proteins (UgpA and UgpE) and a solute-binding protein (UgpB).

Its subcellular location is the cell inner membrane. It catalyses the reaction sn-glycerol 3-phosphate(out) + ATP + H2O = sn-glycerol 3-phosphate(in) + ADP + phosphate + H(+). In terms of biological role, part of the ABC transporter complex UgpBAEC involved in sn-glycerol-3-phosphate (G3P) import. Responsible for energy coupling to the transport system. The protein is sn-glycerol-3-phosphate import ATP-binding protein UgpC of Vibrio vulnificus (strain YJ016).